We begin with the raw amino-acid sequence, 426 residues long: Putative 3-oxoacyl-[acyl-carrier-protein] synthase, mitochondrial (426 aa).

Residues 1-18 (MKRVVITGLGAVTPLGNG) constitute a mitochondrion transit peptide. The Ketosynthase family 3 (KS3) domain maps to 19–423 (VKTNWRNLIQ…GTNASLCFKK (405 aa)). Catalysis depends on for beta-ketoacyl synthase activity residues Cys-170, His-311, and His-351.

Belongs to the thiolase-like superfamily. Beta-ketoacyl-ACP synthases family.

The protein resides in the mitochondrion. The enzyme catalyses a fatty acyl-[ACP] + malonyl-[ACP] + H(+) = a 3-oxoacyl-[ACP] + holo-[ACP] + CO2. It carries out the reaction butanoyl-[ACP] + malonyl-[ACP] + H(+) = 3-oxohexanoyl-[ACP] + holo-[ACP] + CO2. The catalysed reaction is hexanoyl-[ACP] + malonyl-[ACP] + H(+) = 3-oxooctanoyl-[ACP] + holo-[ACP] + CO2. It catalyses the reaction octanoyl-[ACP] + malonyl-[ACP] + H(+) = 3-oxodecanoyl-[ACP] + holo-[ACP] + CO2. The enzyme catalyses decanoyl-[ACP] + malonyl-[ACP] + H(+) = 3-oxododecanoyl-[ACP] + holo-[ACP] + CO2. It carries out the reaction dodecanoyl-[ACP] + malonyl-[ACP] + H(+) = 3-oxotetradecanoyl-[ACP] + holo-[ACP] + CO2. The catalysed reaction is tetradecanoyl-[ACP] + malonyl-[ACP] + H(+) = 3-oxohexadecanoyl-[ACP] + holo-[ACP] + CO2. It functions in the pathway lipid metabolism; fatty acid biosynthesis. May play a role in the biosynthesis of lipoic acid as well as longer chain fatty acids required for optimal mitochondrial function. This chain is Putative 3-oxoacyl-[acyl-carrier-protein] synthase, mitochondrial, found in Schizosaccharomyces pombe (strain 972 / ATCC 24843) (Fission yeast).